Reading from the N-terminus, the 157-residue chain is Putative pre-16S rRNA nuclease (157 aa).

The protein belongs to the YqgF nuclease family.

It localises to the cytoplasm. In terms of biological role, could be a nuclease involved in processing of the 5'-end of pre-16S rRNA. This chain is Putative pre-16S rRNA nuclease, found in Anaplasma marginale (strain St. Maries).